Consider the following 438-residue polypeptide: UDP-N-acetyl-D-mannosamine dehydrogenase (438 aa).

Residues Y21, I22, D41, R46, T93, and T131 each contribute to the NAD(+) site. UDP-N-acetyl-alpha-D-mannosaminouronate-binding residues include R160, V161, K212, N216, R219, H250, R252, and G263. The Proton donor/acceptor role is filled by K212. The Nucleophile role is filled by C266. 2 residues coordinate UDP-N-acetyl-alpha-D-mannosaminouronate: Y323 and K324. R331 provides a ligand contact to NAD(+). K409 provides a ligand contact to UDP-N-acetyl-alpha-D-mannosaminouronate.

It belongs to the UDP-glucose/GDP-mannose dehydrogenase family. As to quaternary structure, homotetramer; probably dimer of dimers.

It catalyses the reaction UDP-N-acetyl-alpha-D-mannosamine + 2 NAD(+) + H2O = UDP-N-acetyl-alpha-D-mannosaminouronate + 2 NADH + 3 H(+). In terms of biological role, catalyzes the four-electron oxidation of UDP-N-acetyl-D-mannosamine (UDP-ManNAc), reducing NAD(+) and releasing UDP-N-acetylmannosaminuronic acid (UDP-ManNAcA). This chain is UDP-N-acetyl-D-mannosamine dehydrogenase (wecC), found in Methanococcus aeolicus (strain ATCC BAA-1280 / DSM 17508 / OCM 812 / Nankai-3).